The chain runs to 552 residues: Probable malate:quinone oxidoreductase (552 aa).

The tract at residues 530-552 (DAKPATPEAKPAQASSPQHDMAL) is disordered. A compositionally biased stretch (polar residues) spans 542–552 (QASSPQHDMAL).

Belongs to the MQO family. FAD is required as a cofactor.

The catalysed reaction is (S)-malate + a quinone = a quinol + oxaloacetate. The protein operates within carbohydrate metabolism; tricarboxylic acid cycle; oxaloacetate from (S)-malate (quinone route): step 1/1. In Cronobacter sakazakii (strain ATCC BAA-894) (Enterobacter sakazakii), this protein is Probable malate:quinone oxidoreductase.